Reading from the N-terminus, the 688-residue chain is MNFENLLIELGTEELPPKALRKLAESFLANFTEELTKADLAFKSAAWYAAPRRLAINVTELAIAQADKIVEKRGPAVSSAFDAEGKPTKAAEGWARGNGITVDQAERLVTDKGEWLVYNAKVEGVETKSLIAAMAQRALDKLPIPKPMRWGSSKTQFIRPVHTATMLLGSELIEGELLGIKSARNVRGHRFMGTGFELDHADNYLTLLKEKGKVIADYESRKALIKADAEKAAAKIGGTADIEDDLLEEVTSLVEWPVVLTASFEEKFLNVPSEALVYTMKGDQKYFPVFDEAGKLLPNFIFVANIESKDPAQIIAGNEKVVRPRLADAEFFFNTDKKHTLESRLPSLETVLFQQQLGTLKDKVTRISALAAFIAEQTGANAVDAARAGLLSKTDLMTNMVMEFTDTQGTMGMHYARLDGETEAVALAMEEQYKPKFSGDTVPTAAVSCAVALADKLDTLVGIFGIGQAPKGAADPFALRRAAIGVLRIIVENKLPLDLVTLIAKAQELHGTNLSNANASDEVLEFLMARFRAWYQDKGIDVDVILAVLARRPTRPADFDSRINAVSHFRSLEASSALAAANKRVSNILAKVEGELPTAINSALLAEAAEQALAAKLAELQPQLAPLFANADYQQALTLLSSLRESVDQFFEDVMVMADDEALKNNRLALLNNLREQFLHVADISLLQ.

Belongs to the class-II aminoacyl-tRNA synthetase family. In terms of assembly, tetramer of two alpha and two beta subunits.

The protein resides in the cytoplasm. It carries out the reaction tRNA(Gly) + glycine + ATP = glycyl-tRNA(Gly) + AMP + diphosphate. The polypeptide is Glycine--tRNA ligase beta subunit (Shewanella sp. (strain MR-7)).